A 247-amino-acid polypeptide reads, in one-letter code: 14-3-3 protein gamma-B (247 aa).

It belongs to the 14-3-3 family. Homodimer, and heterodimer with other family members.

The protein resides in the cytoplasm. Its function is as follows. Adapter protein implicated in the regulation of a large spectrum of both general and specialized signaling pathways. Binds to a large number of partners, usually by recognition of a phosphoserine or phosphothreonine motif. Binding generally results in the modulation of the activity of the binding partner. This chain is 14-3-3 protein gamma-B (ywhag-b), found in Xenopus laevis (African clawed frog).